A 257-amino-acid polypeptide reads, in one-letter code: Hydroxyacylglutathione hydrolase (257 aa).

His54, His56, Asp58, His59, His110, Asp131, and His169 together coordinate Zn(2+).

Belongs to the metallo-beta-lactamase superfamily. Glyoxalase II family. Monomer. Zn(2+) serves as cofactor.

The catalysed reaction is an S-(2-hydroxyacyl)glutathione + H2O = a 2-hydroxy carboxylate + glutathione + H(+). Its pathway is secondary metabolite metabolism; methylglyoxal degradation; (R)-lactate from methylglyoxal: step 2/2. In terms of biological role, thiolesterase that catalyzes the hydrolysis of S-D-lactoyl-glutathione to form glutathione and D-lactic acid. The chain is Hydroxyacylglutathione hydrolase from Hahella chejuensis (strain KCTC 2396).